The sequence spans 237 residues: Probable transcriptional regulatory protein EAT1b_0153 (237 aa).

Belongs to the TACO1 family. YeeN subfamily.

It localises to the cytoplasm. The protein is Probable transcriptional regulatory protein EAT1b_0153 of Exiguobacterium sp. (strain ATCC BAA-1283 / AT1b).